We begin with the raw amino-acid sequence, 146 residues long: Large ribosomal subunit protein uL15 (146 aa).

Positions 1-64 are disordered; that stretch reads MQLNTIKPAI…MPMHRRLPKR (64 aa). Basic residues predominate over residues 30–39; that stretch reads TATKGHKGQK.

Belongs to the universal ribosomal protein uL15 family. As to quaternary structure, part of the 50S ribosomal subunit.

Functionally, binds to the 23S rRNA. The sequence is that of Large ribosomal subunit protein uL15 from Geobacter sp. (strain M21).